Reading from the N-terminus, the 120-residue chain is Large ribosomal subunit protein bL19 (120 aa).

The protein belongs to the bacterial ribosomal protein bL19 family.

This protein is located at the 30S-50S ribosomal subunit interface and may play a role in the structure and function of the aminoacyl-tRNA binding site. The chain is Large ribosomal subunit protein bL19 from Thermosynechococcus vestitus (strain NIES-2133 / IAM M-273 / BP-1).